The primary structure comprises 381 residues: Outer membrane protein assembly factor BamB (381 aa).

An N-terminal signal peptide occupies residues methionine 1–alanine 22. Cysteine 23 carries N-palmitoyl cysteine lipidation. Cysteine 23 is lipidated: S-diacylglycerol cysteine.

Belongs to the BamB family. Part of the Bam complex.

The protein localises to the cell outer membrane. Part of the outer membrane protein assembly complex, which is involved in assembly and insertion of beta-barrel proteins into the outer membrane. This is Outer membrane protein assembly factor BamB from Burkholderia pseudomallei (strain K96243).